Here is a 292-residue protein sequence, read N- to C-terminus: Protease HtpX homolog (292 aa).

The next 2 membrane-spanning stretches (helical) occupy residues 9 to 29 (TGVL…VLGN) and 31 to 51 (TGMM…YWYS). H133 is a binding site for Zn(2+). E134 is a catalytic residue. H137 contributes to the Zn(2+) binding site. 2 helical membrane passes run 148–168 (LAAV…WMLW) and 185–205 (LGAI…QMAI). Zn(2+) is bound at residue E210.

Belongs to the peptidase M48B family. The cofactor is Zn(2+).

It is found in the cell membrane. The sequence is that of Protease HtpX homolog from Thermococcus sibiricus (strain DSM 12597 / MM 739).